We begin with the raw amino-acid sequence, 906 residues long: Probable dipeptidyl-aminopeptidase B (906 aa).

Residues 1–11 are compositionally biased toward acidic residues; that stretch reads MRSSEDREDSE. The segment at 1-33 is disordered; sequence MRSSEDREDSELLPANRPRSPSRSSYDSDDSGL. Residues 1 to 85 are Cytoplasmic-facing; that stretch reads MRSSEDREDS…TKASSSRSRR (85 aa). Positions 21 to 33 are enriched in low complexity; it reads PSRSSYDSDDSGL. Residues 86 to 106 traverse the membrane as a helical; Signal-anchor for type II membrane protein segment; it reads LLWLVVLLCCGGWVVAFVLFI. The Vacuolar segment spans residues 107 to 906; sequence TQGRADYRTA…AKRVWPGFAH (800 aa). Residues Asn338 and Asn629 are each glycosylated (N-linked (GlcNAc...) asparagine). Ser743 (charge relay system) is an active-site residue. N-linked (GlcNAc...) asparagine glycosylation is present at Asn797. Residues Asp820 and His853 each act as charge relay system in the active site.

Belongs to the peptidase S9B family.

It localises to the vacuole membrane. The enzyme catalyses Release of an N-terminal dipeptide, Xaa-Yaa-|-Zaa-, from a polypeptide, preferentially when Yaa is Pro, provided Zaa is neither Pro nor hydroxyproline.. Its function is as follows. Type IV dipeptidyl-peptidase which removes N-terminal dipeptides sequentially from polypeptides having unsubstituted N-termini provided that the penultimate residue is proline. In Emericella nidulans (strain FGSC A4 / ATCC 38163 / CBS 112.46 / NRRL 194 / M139) (Aspergillus nidulans), this protein is Probable dipeptidyl-aminopeptidase B (dapB).